Reading from the N-terminus, the 236-residue chain is 2,3,4,5-tetrahydropyridine-2,6-dicarboxylate N-acetyltransferase (236 aa).

This sequence belongs to the transferase hexapeptide repeat family. DapH subfamily.

The catalysed reaction is (S)-2,3,4,5-tetrahydrodipicolinate + acetyl-CoA + H2O = L-2-acetamido-6-oxoheptanedioate + CoA. It participates in amino-acid biosynthesis; L-lysine biosynthesis via DAP pathway; LL-2,6-diaminopimelate from (S)-tetrahydrodipicolinate (acetylase route): step 1/3. Functionally, catalyzes the transfer of an acetyl group from acetyl-CoA to tetrahydrodipicolinate. The sequence is that of 2,3,4,5-tetrahydropyridine-2,6-dicarboxylate N-acetyltransferase from Geobacillus thermodenitrificans (strain NG80-2).